The following is a 233-amino-acid chain: Biosynthetic peptidoglycan transglycosylase (233 aa).

The helical transmembrane segment at 8–28 (LIALPVGIFIFFNAYVYGNII) threads the bilayer.

Belongs to the glycosyltransferase 51 family.

The protein localises to the cell inner membrane. The catalysed reaction is [GlcNAc-(1-&gt;4)-Mur2Ac(oyl-L-Ala-gamma-D-Glu-L-Lys-D-Ala-D-Ala)](n)-di-trans,octa-cis-undecaprenyl diphosphate + beta-D-GlcNAc-(1-&gt;4)-Mur2Ac(oyl-L-Ala-gamma-D-Glu-L-Lys-D-Ala-D-Ala)-di-trans,octa-cis-undecaprenyl diphosphate = [GlcNAc-(1-&gt;4)-Mur2Ac(oyl-L-Ala-gamma-D-Glu-L-Lys-D-Ala-D-Ala)](n+1)-di-trans,octa-cis-undecaprenyl diphosphate + di-trans,octa-cis-undecaprenyl diphosphate + H(+). The protein operates within cell wall biogenesis; peptidoglycan biosynthesis. Functionally, peptidoglycan polymerase that catalyzes glycan chain elongation from lipid-linked precursors. This is Biosynthetic peptidoglycan transglycosylase from Neisseria meningitidis serogroup C (strain 053442).